The chain runs to 316 residues: MSNKLAQLRKLTTVVADTGEIDAIKKYQPEDATTNPSLILKAAQIAEYAPLIDQAIAYAKTQSNDKAQQVQDTCDMLAVNIGKEILKTIPGRISTEVDARLSYDMERSVAKARQLVKMYNDAGISNDRILIKLASTWEGIRAAEILEKEGINCNLTLLFSFAQARACAEAGVFLISPFVGRIMDWYKAKEGRDFAASEDPGVLSVTKIYNYYKEHGYKTVVMGASFRNIGEILELAGCDRLTIAPSLLAELEAAEGELVAKLVDSKGSKARPAPMTHSEFLWEHNLDAMAVEKLAEGIRNFAVDQGKLEAMIAAKL.

K132 (schiff-base intermediate with substrate) is an active-site residue.

Belongs to the transaldolase family. Type 1 subfamily. As to quaternary structure, homodimer.

It is found in the cytoplasm. It carries out the reaction D-sedoheptulose 7-phosphate + D-glyceraldehyde 3-phosphate = D-erythrose 4-phosphate + beta-D-fructose 6-phosphate. Its pathway is carbohydrate degradation; pentose phosphate pathway; D-glyceraldehyde 3-phosphate and beta-D-fructose 6-phosphate from D-ribose 5-phosphate and D-xylulose 5-phosphate (non-oxidative stage): step 2/3. Functionally, transaldolase is important for the balance of metabolites in the pentose-phosphate pathway. In Vibrio cholerae serotype O1 (strain ATCC 39541 / Classical Ogawa 395 / O395), this protein is Transaldolase.